Here is a 644-residue protein sequence, read N- to C-terminus: Exoribonuclease 2 (644 aa).

An RNB domain is found at 189-516 (REDLTALDFV…NHRLLKAVIK (328 aa)). The region spanning 561 to 643 (DTRFAAEIVD…ETRSIIARPV (83 aa)) is the S1 motif domain.

This sequence belongs to the RNR ribonuclease family. RNase II subfamily.

Its subcellular location is the cytoplasm. It carries out the reaction Exonucleolytic cleavage in the 3'- to 5'-direction to yield nucleoside 5'-phosphates.. In terms of biological role, involved in mRNA degradation. Hydrolyzes single-stranded polyribonucleotides processively in the 3' to 5' direction. This Escherichia coli (strain UTI89 / UPEC) protein is Exoribonuclease 2.